Consider the following 529-residue polypeptide: Bifunctional purine biosynthesis protein PurH (529 aa).

The region spanning 1–148 (MQQRRPVRRA…KNHKDVAIVV (148 aa)) is the MGS-like domain.

It belongs to the PurH family.

It carries out the reaction (6R)-10-formyltetrahydrofolate + 5-amino-1-(5-phospho-beta-D-ribosyl)imidazole-4-carboxamide = 5-formamido-1-(5-phospho-D-ribosyl)imidazole-4-carboxamide + (6S)-5,6,7,8-tetrahydrofolate. The catalysed reaction is IMP + H2O = 5-formamido-1-(5-phospho-D-ribosyl)imidazole-4-carboxamide. It functions in the pathway purine metabolism; IMP biosynthesis via de novo pathway; 5-formamido-1-(5-phospho-D-ribosyl)imidazole-4-carboxamide from 5-amino-1-(5-phospho-D-ribosyl)imidazole-4-carboxamide (10-formyl THF route): step 1/1. It participates in purine metabolism; IMP biosynthesis via de novo pathway; IMP from 5-formamido-1-(5-phospho-D-ribosyl)imidazole-4-carboxamide: step 1/1. The chain is Bifunctional purine biosynthesis protein PurH from Salmonella agona (strain SL483).